Consider the following 91-residue polypeptide: Potassium channel toxin TtrKIK (91 aa).

The N-terminal stretch at 1 to 25 (MVATNRCCVFALLFALLLVHSLTEA) is a signal peptide. Positions 26 to 44 (GKGKEVLGKIKDKLIEAKD) are excised as a propeptide. Positions 58-91 (EYACPAIEKFCEDHCAAKKAVGKCDDFKCNCIKL) constitute a BetaSPN-type CS-alpha/beta domain. 3 disulfide bridges follow: C61-C81, C68-C86, and C72-C88.

The protein belongs to the long chain scorpion toxin family. Class 2 subfamily. As to expression, expressed by the venom gland.

It localises to the secreted. Functionally, the full peptide presents antibacterial and cytotoxic activities. The synthetic C-terminus (AA 33-76) inhibits voltage-gated potassium channels Kv1.1/KCNA1, Kv1.2/KCNA2, and Kv1.3/KCNA3. This chain is Potassium channel toxin TtrKIK, found in Tityus trivittatus (Argentinean scorpion).